The following is an 883-amino-acid chain: Valine--tRNA ligase (883 aa).

Residues 46-56 carry the 'HIGH' region motif; that stretch reads PNVTGKLHLGH. The 'KMSKS' region signature appears at 520–524; that stretch reads KMSKS. Residue K523 participates in ATP binding. The stretch at 809–883 forms a coiled coil; that stretch reads LADLLNVEEE…RIDEMKKLVK (75 aa).

Belongs to the class-I aminoacyl-tRNA synthetase family. ValS type 1 subfamily. As to quaternary structure, monomer.

Its subcellular location is the cytoplasm. It catalyses the reaction tRNA(Val) + L-valine + ATP = L-valyl-tRNA(Val) + AMP + diphosphate. In terms of biological role, catalyzes the attachment of valine to tRNA(Val). As ValRS can inadvertently accommodate and process structurally similar amino acids such as threonine, to avoid such errors, it has a 'posttransfer' editing activity that hydrolyzes mischarged Thr-tRNA(Val) in a tRNA-dependent manner. This chain is Valine--tRNA ligase, found in Streptococcus pneumoniae serotype 4 (strain ATCC BAA-334 / TIGR4).